Reading from the N-terminus, the 163-residue chain is Cytochrome b6-f complex subunit 4 (163 aa).

Transmembrane regions (helical) follow at residues L36–V56, L95–E115, and T131–I151.

It belongs to the cytochrome b family. PetD subfamily. As to quaternary structure, the 4 large subunits of the cytochrome b6-f complex are cytochrome b6, subunit IV (17 kDa polypeptide, petD), cytochrome f and the Rieske protein, while the 4 small subunits are petG, petL, petM and petN. The complex functions as a dimer.

It localises to the plastid. The protein localises to the chloroplast thylakoid membrane. Component of the cytochrome b6-f complex, which mediates electron transfer between photosystem II (PSII) and photosystem I (PSI), cyclic electron flow around PSI, and state transitions. This chain is Cytochrome b6-f complex subunit 4, found in Pelargonium hortorum (Common geranium).